Here is a 285-residue protein sequence, read N- to C-terminus: UPF0603 protein At1g54780, chloroplastic (285 aa).

2 disordered regions span residues 1–48 (METL…LSTR) and 228–251 (GQPDPGGPTVKDSKRESNFKTKEE). Residues 22–40 (HQTKPTSHSLSLSKPTTFS) are compositionally biased toward polar residues. Positions 238-251 (KDSKRESNFKTKEE) are enriched in basic and acidic residues. A helical transmembrane segment spans residues 259-279 (FSLVVGGLLVIAFVVPMAQYF).

Belongs to the UPF0603 family.

It is found in the plastid. It localises to the chloroplast thylakoid membrane. The protein is UPF0603 protein At1g54780, chloroplastic of Arabidopsis thaliana (Mouse-ear cress).